A 386-amino-acid chain; its full sequence is Histidinol-phosphate aminotransferase (386 aa).

Polar residues predominate over residues 1–11; that stretch reads MMVRKSTASNR. The tract at residues 1–22 is disordered; that stretch reads MMVRKSTASNRRLQDKGDEEPV. Residue Lys-248 is modified to N6-(pyridoxal phosphate)lysine.

The protein belongs to the class-II pyridoxal-phosphate-dependent aminotransferase family. Histidinol-phosphate aminotransferase subfamily. In terms of assembly, homodimer. The cofactor is pyridoxal 5'-phosphate.

The catalysed reaction is L-histidinol phosphate + 2-oxoglutarate = 3-(imidazol-4-yl)-2-oxopropyl phosphate + L-glutamate. It functions in the pathway amino-acid biosynthesis; L-histidine biosynthesis; L-histidine from 5-phospho-alpha-D-ribose 1-diphosphate: step 7/9. The protein is Histidinol-phosphate aminotransferase of Moorella thermoacetica (strain ATCC 39073 / JCM 9320).